We begin with the raw amino-acid sequence, 257 residues long: Myosin-8 (257 aa).

A coiled-coil region spans residues 1–257 (RAALQAEIEE…REVHTKISAE (257 aa)). Serine 33, serine 45, and serine 58 each carry phosphoserine.

In terms of assembly, muscle myosin is a hexameric protein that consists of 2 heavy chain subunits (MHC), 2 alkali light chain subunits (MLC) and 2 regulatory light chain subunits (MLC-2).

The protein localises to the cytoplasm. It is found in the myofibril. Functionally, muscle contraction. This is Myosin-8 (Myh8) from Rattus norvegicus (Rat).